Reading from the N-terminus, the 222-residue chain is Octanoyltransferase (222 aa).

The 176-residue stretch at 35-210 (ETTPDELWLV…EFVHLLGYPK (176 aa)) folds into the BPL/LPL catalytic domain. Substrate contacts are provided by residues 74–81 (RGGQVTYH), 141–143 (SLG), and 154–156 (GLA). The Acyl-thioester intermediate role is filled by Cys-172.

It belongs to the LipB family.

It localises to the cytoplasm. The enzyme catalyses octanoyl-[ACP] + L-lysyl-[protein] = N(6)-octanoyl-L-lysyl-[protein] + holo-[ACP] + H(+). It functions in the pathway protein modification; protein lipoylation via endogenous pathway; protein N(6)-(lipoyl)lysine from octanoyl-[acyl-carrier-protein]: step 1/2. In terms of biological role, catalyzes the transfer of endogenously produced octanoic acid from octanoyl-acyl-carrier-protein onto the lipoyl domains of lipoate-dependent enzymes. Lipoyl-ACP can also act as a substrate although octanoyl-ACP is likely to be the physiological substrate. This is Octanoyltransferase from Serratia proteamaculans (strain 568).